Here is a 241-residue protein sequence, read N- to C-terminus: Phosphatidylglycerophosphatase B (241 aa).

A helical transmembrane segment spans residues 1–21; it reads MFKRLSLYTLLLCLVPFFIWG. Over 22 to 52 the chain is Periplasmic; that stretch reads ISYQWHGNSQLTQADYWLYLLTETGSVPYAL. A helical transmembrane segment spans residues 53–62; it reads ITCVLFTLLF. The Cytoplasmic segment spans residues 63 to 67; the sequence is AFLFK. Residues 68-91 traverse the membrane as a helical segment; that stretch reads NPKQWILGVIVMGISVIATQAAKT. The Periplasmic segment spans residues 92–158; the sequence is GAKALFEEPR…ENETGYSFPS (67 aa). The segment at 94 to 102 is phosphatase sequence motif I; the sequence is KALFEEPRP. The tract at residues 157–160 is phosphatase sequence motif II; sequence PSGH. The helical transmembrane segment at 159–173 threads the bilayer; that stretch reads GHTIFAATWLMLAVG. The active-site Proton donor; for a subset of substrates is the histidine 160. Residues 174–184 lie on the Cytoplasmic side of the membrane; the sequence is FTQLLGNRSFK. A helical membrane pass occupies residues 185-204; that stretch reads AKLLVVGIAVWGLLMLISRV. A phosphatase sequence motif III region spans residues 202–213; it reads SRVRLGMHYPID. Residues 205–210 lie on the Periplasmic side of the membrane; that stretch reads RLGMHY. Histidine 209 functions as the Nucleophile in the catalytic mechanism. The helical transmembrane segment at 211-235 threads the bilayer; the sequence is PIDLLVATLLAWLINSIIFAFLKKK. Topologically, residues 236–241 are cytoplasmic; that stretch reads AIFVMK.

This sequence belongs to the PA-phosphatase related phosphoesterase family.

The protein resides in the cell inner membrane. The protein localises to the cell outer membrane. The catalysed reaction is a 1,2-diacyl-sn-glycero-3-phospho-(1'-sn-glycero-3'-phosphate) + H2O = a 1,2-diacyl-sn-glycero-3-phospho-(1'-sn-glycerol) + phosphate. The enzyme catalyses a 1,2-diacyl-sn-glycerol 3-diphosphate + H2O = a 1,2-diacyl-sn-glycero-3-phosphate + phosphate + H(+). It catalyses the reaction a 1,2-diacyl-sn-glycero-3-phosphate + H2O = a 1,2-diacyl-sn-glycerol + phosphate. It carries out the reaction di-trans,octa-cis-undecaprenyl diphosphate + H2O = di-trans,octa-cis-undecaprenyl phosphate + phosphate + H(+). Its pathway is phospholipid metabolism; phosphatidylglycerol biosynthesis; phosphatidylglycerol from CDP-diacylglycerol: step 2/2. Functionally, catalyzes the dephosphorylation of diacylglycerol diphosphate (DGPP) to phosphatidate (PA) and the subsequent dephosphorylation of PA to diacylglycerol (DAG). Also has undecaprenyl pyrophosphate phosphatase activity, required for the biosynthesis of the lipid carrier undecaprenyl phosphate. Can also use lysophosphatidic acid (LPA) and phosphatidylglycerophosphate as substrates. The pattern of activities varies according to subcellular location, PGP phosphatase activity is higher in the cytoplasmic membrane, whereas PA and LPA phosphatase activities are higher in the outer membrane. Activity is independent of a divalent cation ion and insensitive to inhibition by N-ethylmaleimide. The chain is Phosphatidylglycerophosphatase B (pgpB) from Haemophilus influenzae (strain ATCC 51907 / DSM 11121 / KW20 / Rd).